Reading from the N-terminus, the 150-residue chain is Nucleoside diphosphate kinase (150 aa).

Lysine 9, phenylalanine 57, arginine 85, threonine 91, arginine 102, and asparagine 112 together coordinate ATP. Residue histidine 115 is the Pros-phosphohistidine intermediate of the active site.

Belongs to the NDK family. Homotetramer. The cofactor is Mg(2+).

It localises to the cytoplasm. The enzyme catalyses a 2'-deoxyribonucleoside 5'-diphosphate + ATP = a 2'-deoxyribonucleoside 5'-triphosphate + ADP. The catalysed reaction is a ribonucleoside 5'-diphosphate + ATP = a ribonucleoside 5'-triphosphate + ADP. Functionally, major role in the synthesis of nucleoside triphosphates other than ATP. The ATP gamma phosphate is transferred to the NDP beta phosphate via a ping-pong mechanism, using a phosphorylated active-site intermediate. This Thermosynechococcus vestitus (strain NIES-2133 / IAM M-273 / BP-1) protein is Nucleoside diphosphate kinase.